Consider the following 194-residue polypeptide: Putative L,D-transpeptidase YciB (194 aa).

The N-terminal stretch at 1–19 is a signal peptide; the sequence is MKLSLFIIAVLMPVILLSA. Residue Cys20 is the site of N-palmitoyl cysteine attachment. Cys20 is lipidated: S-diacylglycerol cysteine. The L,D-TPase catalytic domain maps to 68 to 194; sequence VWIDVNVKEQ…IPEHTKVVIS (127 aa). The Proton donor/acceptor role is filled by His144. Catalysis depends on Cys170, which acts as the Nucleophile.

It belongs to the YkuD family.

The protein localises to the cell membrane. It functions in the pathway cell wall biogenesis; peptidoglycan biosynthesis. The sequence is that of Putative L,D-transpeptidase YciB (yciB) from Bacillus subtilis (strain 168).